A 398-amino-acid chain; its full sequence is Succinate--CoA ligase [ADP-forming] subunit beta (398 aa).

An ATP-grasp domain is found at 9 to 254 (KALLKSYGAP…TTEEDDKEIE (246 aa)). ATP contacts are provided by residues Lys46, 53 to 55 (GRG), Glu109, Ala112, and Glu117. Mg(2+) contacts are provided by Asn209 and Asp223. Residues Asn274 and 331-333 (GIM) each bind substrate.

It belongs to the succinate/malate CoA ligase beta subunit family. Heterotetramer of two alpha and two beta subunits. Mg(2+) is required as a cofactor.

The enzyme catalyses succinate + ATP + CoA = succinyl-CoA + ADP + phosphate. It carries out the reaction GTP + succinate + CoA = succinyl-CoA + GDP + phosphate. Its pathway is carbohydrate metabolism; tricarboxylic acid cycle; succinate from succinyl-CoA (ligase route): step 1/1. Its function is as follows. Succinyl-CoA synthetase functions in the citric acid cycle (TCA), coupling the hydrolysis of succinyl-CoA to the synthesis of either ATP or GTP and thus represents the only step of substrate-level phosphorylation in the TCA. The beta subunit provides nucleotide specificity of the enzyme and binds the substrate succinate, while the binding sites for coenzyme A and phosphate are found in the alpha subunit. The chain is Succinate--CoA ligase [ADP-forming] subunit beta from Rhizobium meliloti (strain 1021) (Ensifer meliloti).